Here is a 236-residue protein sequence, read N- to C-terminus: Aminopyrimidine aminohydrolase (236 aa).

Aspartate 44 serves as a coordination point for substrate. The active-site Nucleophile is the cysteine 135. Residues tyrosine 139 and tyrosine 163 each coordinate substrate. Glutamate 205 serves as the catalytic Proton donor.

It belongs to the TenA family. In terms of assembly, homotetramer.

The catalysed reaction is 4-amino-5-aminomethyl-2-methylpyrimidine + H2O = 4-amino-5-hydroxymethyl-2-methylpyrimidine + NH4(+). The enzyme catalyses thiamine + H2O = 5-(2-hydroxyethyl)-4-methylthiazole + 4-amino-5-hydroxymethyl-2-methylpyrimidine + H(+). It participates in cofactor biosynthesis; thiamine diphosphate biosynthesis. Functionally, catalyzes an amino-pyrimidine hydrolysis reaction at the C5' of the pyrimidine moiety of thiamine compounds, a reaction that is part of a thiamine salvage pathway. Thus, catalyzes the conversion of 4-amino-5-aminomethyl-2-methylpyrimidine to 4-amino-5-hydroxymethyl-2-methylpyrimidine (HMP). To a lesser extent, is also able to catalyze the hydrolytic cleavage of thiamine; however, this thiaminase activity is unlikely to be physiologically relevant. Therefore, is involved in the regeneration of the thiamine pyrimidine from thiamine degraded products present in the environment, rather than in thiamine degradation. The protein is Aminopyrimidine aminohydrolase of Bacillus subtilis (strain 168).